Here is a 464-residue protein sequence, read N- to C-terminus: tRNA modification GTPase MnmE (464 aa).

The (6S)-5-formyl-5,6,7,8-tetrahydrofolate site is built by arginine 25, glutamate 87, and lysine 130. Residues 226–386 (GLSVVLAGQP…LRAELLRIAG (161 aa)) enclose the TrmE-type G domain. A K(+)-binding site is contributed by asparagine 236. Residues 236-241 (NVGKSS), 255-261 (TPIAGTT), and 280-283 (DTAG) contribute to the GTP site. Serine 240 lines the Mg(2+) pocket. Threonine 255, isoleucine 257, and threonine 260 together coordinate K(+). Mg(2+) is bound at residue threonine 261. (6S)-5-formyl-5,6,7,8-tetrahydrofolate is bound at residue lysine 464.

This sequence belongs to the TRAFAC class TrmE-Era-EngA-EngB-Septin-like GTPase superfamily. TrmE GTPase family. In terms of assembly, homodimer. Heterotetramer of two MnmE and two MnmG subunits. Requires K(+) as cofactor.

Its subcellular location is the cytoplasm. Exhibits a very high intrinsic GTPase hydrolysis rate. Involved in the addition of a carboxymethylaminomethyl (cmnm) group at the wobble position (U34) of certain tRNAs, forming tRNA-cmnm(5)s(2)U34. This is tRNA modification GTPase MnmE from Burkholderia ambifaria (strain ATCC BAA-244 / DSM 16087 / CCUG 44356 / LMG 19182 / AMMD) (Burkholderia cepacia (strain AMMD)).